The chain runs to 211 residues: Protein crossbronx-like (211 aa).

The region spanning 17-177 (NQGYQILAEY…VRNSILWSCK (161 aa)) is the UBC core domain.

Belongs to the ubiquitin-conjugating enzyme family. FTS subfamily.

This Drosophila grimshawi (Hawaiian fruit fly) protein is Protein crossbronx-like.